The following is a 445-amino-acid chain: Ubiquitin carboxyl-terminal hydrolase MINDY-3 (445 aa).

Cysteine 51 functions as the Nucleophile in the catalytic mechanism. Position 125 is a phosphoserine (serine 125). Histidine 287 functions as the Proton acceptor in the catalytic mechanism.

Belongs to the MINDY deubiquitinase family. FAM188 subfamily. In terms of assembly, interacts with COPS5. Widely expressed with high levels in heart, skeletal muscle, and kidney, and low levels in liver and brain. Also expressed in lung (at protein level).

It localises to the nucleus. It catalyses the reaction Thiol-dependent hydrolysis of ester, thioester, amide, peptide and isopeptide bonds formed by the C-terminal Gly of ubiquitin (a 76-residue protein attached to proteins as an intracellular targeting signal).. Hydrolase that can remove 'Lys-48'-linked conjugated ubiquitin from proteins. The sequence is that of Ubiquitin carboxyl-terminal hydrolase MINDY-3 from Homo sapiens (Human).